The primary structure comprises 147 residues: Large ribosomal subunit protein uL13 (147 aa).

This sequence belongs to the universal ribosomal protein uL13 family. In terms of assembly, part of the 50S ribosomal subunit.

This protein is one of the early assembly proteins of the 50S ribosomal subunit, although it is not seen to bind rRNA by itself. It is important during the early stages of 50S assembly. In Leuconostoc citreum (strain KM20), this protein is Large ribosomal subunit protein uL13.